A 556-amino-acid chain; its full sequence is Innexin-7 (556 aa).

The next 3 membrane-spanning stretches (helical) occupy residues 21–41 (LVAS…AVLI), 127–147 (FFLL…KYFA), and 213–233 (AYYV…NVIL). N-linked (GlcNAc...) asparagine glycosylation is present at N267. The chain crosses the membrane as a helical span at residues 310 to 330 (IFVFLWAWYILLTAFTVGNLF). The disordered stretch occupies residues 431 to 556 (DESQVESGKN…IPKTAEKKHW (126 aa)). Over residues 435 to 447 (VESGKNTAPSTSH) the composition is skewed to polar residues. Residues 452–461 (RGTEQLEKNV) are compositionally biased toward basic and acidic residues. Polar residues predominate over residues 463-474 (SRQGSLSTQLRP). Residues 500 to 513 (KGSKKPSPTKKKAS) show a composition bias toward basic residues. Residues 514–527 (SKNSPQSSSNSRRP) are compositionally biased toward low complexity. The segment covering 539–556 (HHHEPDSKIPKTAEKKHW) has biased composition (basic and acidic residues).

This sequence belongs to the pannexin family.

The protein resides in the cell membrane. It is found in the cell junction. The protein localises to the gap junction. Structural component of the gap junctions. This Caenorhabditis elegans protein is Innexin-7 (inx-7).